We begin with the raw amino-acid sequence, 148 residues long: Large ribosomal subunit protein bL9 (148 aa).

This sequence belongs to the bacterial ribosomal protein bL9 family.

Binds to the 23S rRNA. This chain is Large ribosomal subunit protein bL9, found in Streptomyces griseus subsp. griseus (strain JCM 4626 / CBS 651.72 / NBRC 13350 / KCC S-0626 / ISP 5235).